The sequence spans 516 residues: Cytochrome P450 monooxygenase lcsI (516 aa).

A helical membrane pass occupies residues Ile-20 to Leu-42. N-linked (GlcNAc...) asparagine glycosylation is found at Asn-131, Asn-184, Asn-415, Asn-420, and Asn-442. Cys-456 serves as a coordination point for heme.

The protein belongs to the cytochrome P450 family. The cofactor is heme.

It localises to the membrane. The protein operates within secondary metabolite biosynthesis. Its function is as follows. Cytochrome P450 monooxygenase; part of the gene cluster that mediates the biosynthesis of the lipopeptide antibiotics leucinostatins that show extensive biological activities, including antimalarial, antiviral, antibacterial, antifungal, and antitumor activities, as well as phytotoxic. Leucinostatin A contains nine amino acid residues, including the unusual amino acid 4-methyl-L-proline (MePro), 2-amino-6-hydroxy-4-methyl-8-oxodecanoic acid (AHyMeOA), 3-hydroxyleucine (HyLeu), alpha-aminoisobutyric acid (AIB), beta-Ala, a 4-methylhex-2-enoic acid at the N-terminus as well as a N1,N1-dimethylpropane-1,2-diamine (DPD) at the C-terminus. The biosynthesis of leucinostatins is probably initiated with the assembly of 4-methylhex-2-enoic acid by a reducing PKS. Two reducing polyketide synthases, lcsB and lcsC, have been identified in the cluster and it is not clear which is the one that assembles 4-methylhex-2-enoic acid since both contain KS, AT, DH, cMT, ER, KR and ACP domains. The polyketide residue might be transferred to the NRPS lcsA, mediated by two additional enzymes, the acyl-CoA ligase lcsD and the thioesterase lcsE. The linear polyketide carboxylic acid, which is released from PKS, is converted to a CoA thioester by lcsD, and then lcsE hydrolyzes the thiol bond and shuttles the polyketide intermediate to lcsA. The C domain of the first module catalyzed the condensation of 4-methylhex-2-enoic acid and MePro carried by domain A1, followed by successive condensations of nine amino acids to trigger the elongation of the linear peptide. A5 and A6 domains of lcsA are proposed to incorporate leucine, A2 AHyMeOA, and A3 incorporates HyLeu. A4, A7 and A8 incorporate AIB. The AHyMeOA in leucinostatin A activated by the A2 might be produced by the second PKS (lcsB or lcsC) present within the cluster. The MePro is probably produced via leucine cyclization and may originate from a separate pathway, independent of the cluster. Another nonproteinogenic amino acid, beta-Ala, could be produced by an aspartic acid decarboxylase also localized outside of the cluster. Two candidates are VFPBJ_01400 and VFPBJ_10476. The final peptide scaffold may be released by the NAD(P)H-dependent thioester reductase (TE) at the C-terminal region of lcsA. Transamination of the lcsA product by the transaminase lcsP may produce DPD at the C-terminus. Further hydroxylation steps performed alternatively by the cytochrome P450 monooxygenases lcsI, lcsK and lcsN then yield the non-methylated leucinostatins precursor. It is also possible that leucines can be hydroxylated prior to their incorporation into the peptide. Varying extents of methylation then lead to the formation of leucinostatins A and B. In Purpureocillium lilacinum (Paecilomyces lilacinus), this protein is Cytochrome P450 monooxygenase lcsI.